The primary structure comprises 622 residues: 1-deoxy-D-xylulose-5-phosphate synthase (622 aa).

Residues histidine 80 and 121–123 each bind thiamine diphosphate; that span reads GHS. Aspartate 152 is a Mg(2+) binding site. Thiamine diphosphate is bound by residues 153–154, asparagine 181, tyrosine 288, and glutamate 369; that span reads GA. Asparagine 181 contributes to the Mg(2+) binding site.

This sequence belongs to the transketolase family. DXPS subfamily. In terms of assembly, homodimer. The cofactor is Mg(2+). Thiamine diphosphate is required as a cofactor.

The catalysed reaction is D-glyceraldehyde 3-phosphate + pyruvate + H(+) = 1-deoxy-D-xylulose 5-phosphate + CO2. It functions in the pathway metabolic intermediate biosynthesis; 1-deoxy-D-xylulose 5-phosphate biosynthesis; 1-deoxy-D-xylulose 5-phosphate from D-glyceraldehyde 3-phosphate and pyruvate: step 1/1. Its function is as follows. Catalyzes the acyloin condensation reaction between C atoms 2 and 3 of pyruvate and glyceraldehyde 3-phosphate to yield 1-deoxy-D-xylulose-5-phosphate (DXP). The sequence is that of 1-deoxy-D-xylulose-5-phosphate synthase from Psychromonas ingrahamii (strain DSM 17664 / CCUG 51855 / 37).